The following is a 374-amino-acid chain: Tetraacyldisaccharide 4'-kinase (374 aa).

43–50 (TMGGTGKT) provides a ligand contact to ATP.

This sequence belongs to the LpxK family.

The catalysed reaction is a lipid A disaccharide + ATP = a lipid IVA + ADP + H(+). It participates in glycolipid biosynthesis; lipid IV(A) biosynthesis; lipid IV(A) from (3R)-3-hydroxytetradecanoyl-[acyl-carrier-protein] and UDP-N-acetyl-alpha-D-glucosamine: step 6/6. Transfers the gamma-phosphate of ATP to the 4'-position of a tetraacyldisaccharide 1-phosphate intermediate (termed DS-1-P) to form tetraacyldisaccharide 1,4'-bis-phosphate (lipid IVA). This chain is Tetraacyldisaccharide 4'-kinase, found in Leptospira biflexa serovar Patoc (strain Patoc 1 / Ames).